Consider the following 212-residue polypeptide: Nucleoredoxin-like protein 1 (212 aa).

Positions 1–164 (MASLFSGRIL…AAEVLDRNFQ (164 aa)) constitute a Thioredoxin domain. The segment at 191 to 212 (AARGGRDPGGGGGEEGGAGGLF) is disordered. Positions 197-212 (DPGGGGGEEGGAGGLF) are enriched in gly residues.

This sequence belongs to the nucleoredoxin family. Interacts with isoform 1 of BSG.

The protein resides in the cell projection. It localises to the cilium. The protein localises to the photoreceptor outer segment. Its function is as follows. Plays an important role in retinal cone photoreceptor survival. In association with glucose transporter SLC16A1/GLUT1 and BSG, promotes retinal cone survival by enhancing aerobic glycolysis and accelerating the entry of glucose into photoreceptors. May play a role in cone cell viability, slowing down cone degeneration, does not seem to play a role in degenerating rods. The sequence is that of Nucleoredoxin-like protein 1 (NXNL1) from Homo sapiens (Human).